Consider the following 391-residue polypeptide: Alkanesulfonate monooxygenase (391 aa).

The protein belongs to the SsuD family.

It catalyses the reaction an alkanesulfonate + FMNH2 + O2 = an aldehyde + FMN + sulfite + H2O + 2 H(+). In terms of biological role, catalyzes the desulfonation of aliphatic sulfonates. This Rhodopseudomonas palustris (strain ATCC BAA-98 / CGA009) protein is Alkanesulfonate monooxygenase.